The sequence spans 261 residues: Ribonuclease HII (261 aa).

The region spanning 71-260 (HYIAGVDEVG…LHKYRHNTLL (190 aa)) is the RNase H type-2 domain. Residues Asp77, Glu78, and Asp169 each contribute to the a divalent metal cation site.

Belongs to the RNase HII family. The cofactor is Mn(2+). Mg(2+) is required as a cofactor.

The protein localises to the cytoplasm. It carries out the reaction Endonucleolytic cleavage to 5'-phosphomonoester.. In terms of biological role, endonuclease that specifically degrades the RNA of RNA-DNA hybrids. The sequence is that of Ribonuclease HII from Oceanobacillus iheyensis (strain DSM 14371 / CIP 107618 / JCM 11309 / KCTC 3954 / HTE831).